The primary structure comprises 324 residues: Dolichyl-phosphate beta-glucosyltransferase (324 aa).

The Lumenal portion of the chain corresponds to 1–7; sequence MATLLLQ. Residues 8–28 form a helical membrane-spanning segment; that stretch reads LLGLGVALAAAALILVSIVAF. Residues 29 to 324 are Cytoplasmic-facing; the sequence is ITATKMPPCY…WRLKQTRKAS (296 aa).

This sequence belongs to the glycosyltransferase 2 family.

It is found in the endoplasmic reticulum membrane. It catalyses the reaction a di-trans,poly-cis-dolichyl phosphate + UDP-alpha-D-glucose = a di-trans,poly-cis-dolichyl beta-D-glucosyl phosphate + UDP. Its pathway is protein modification; protein glycosylation. Its function is as follows. Dolichyl-phosphate beta-glucosyltransferase that operates in the biosynthetic pathway of dolichol-linked oligosaccharides, the glycan precursors employed in protein asparagine (N)-glycosylation. The assembly of dolichol-linked oligosaccharides begins on the cytosolic side of the endoplasmic reticulum membrane and finishes in its lumen. The sequential addition of sugars to dolichol pyrophosphate produces dolichol-linked oligosaccharides containing fourteen sugars, including two GlcNAcs, nine mannoses and three glucoses. Once assembled, the oligosaccharide is transferred from the lipid to nascent proteins by oligosaccharyltransferases. Dolichyl-phosphate beta-glucosyltransferase produces dolichyl beta-D-glucosyl phosphate/Dol-P-Glc, the glucose donor substrate used sequentially by ALG6, ALG8 and ALG10 to add glucose residues on top of the Man(9)GlcNAc(2)-PP-Dol structure. These are the three last steps in the biosynthetic pathway of dolichol-linked oligosaccharides to produce Glc(3)Man(9)GlcNAc(2)-PP-Dol. The enzyme is most probably active on the cytoplasmic side of the endoplasmic reticulum while its product Dol-P-Glc is the substrate for ALG6, ALG8 and ALG11 in the lumen of the endoplasmic reticulum. The protein is Dolichyl-phosphate beta-glucosyltransferase of Mus musculus (Mouse).